Consider the following 1963-residue polypeptide: Myosin-4 (1963 aa).

The 50-residue stretch at 28–77 (DSKKNVWIPDPEEGYLAGEITATKGDQVTIVTARGNEVTLKKELVQEMNP) folds into the Myosin N-terminal SH3-like domain. A Myosin motor domain is found at 81-787 (EKTEDMSNLS…VLAHLEDIRD (707 aa)). Lys125 carries the post-translational modification N6,N6,N6-trimethyllysine. 174–181 (GESGAGKT) contributes to the ATP binding site. Actin-binding stretches follow at residues 662–684 (LNNL…IPNE) and 766–780 (RIGL…GVLA). Residues 848–1161 (MLKAGKEAEE…LEELGEKLDE (314 aa)) are alpha-helical tailpiece (S2). Residues 848-1963 (MLKAGKEAEE…SPSRARASDF (1116 aa)) adopt a coiled-coil conformation. Composition is skewed to basic and acidic residues over residues 970–988 (LRKA…RSLQ) and 1133–1146 (NERQ…RAKS). Disordered stretches follow at residues 970–990 (LRKA…LQDE) and 1125–1146 (SELE…RAKS). The segment at 1162–1173 (QGGATAAQVEVN) is hinge. Residues 1162-1963 (QGGATAAQVE…SPSRARASDF (802 aa)) are light meromyosin (LMM). Disordered stretches follow at residues 1317–1336 (LTSQ…RERQ) and 1912–1963 (LEDA…ASDF). Over residues 1322-1336 (EEARRTADEEARERQ) the composition is skewed to basic and acidic residues.

This sequence belongs to the TRAFAC class myosin-kinesin ATPase superfamily. Myosin family. In terms of assembly, muscle myosin is a hexameric protein that consists of 2 heavy chain subunits (MHC), 2 alkali light chain subunits (MLC) and 2 regulatory light chain subunits (MLC-2). Forms a complex composed of chaperone unc-45, unc-54 and ubiquitin-protein ligase ufd-2; promotes poly-ubiquitination of unfolded unc-54. Within the complex interacts with unc-45 (via UCS domain) and ufd-2. Interacts with itr-1 (via c-terminal coiled coil domain). In terms of processing, unfolded unc-54 is poly-ubiquitinated by ufd-2.

Its subcellular location is the cytoplasm. The protein resides in the myofibril. Required for muscle contraction. The chain is Myosin-4 (unc-54) from Caenorhabditis elegans.